The primary structure comprises 875 residues: Serrate RNA effector molecule homolog (875 aa).

The disordered stretch occupies residues 1–90; sequence MGDSDDEYDR…RRDWDEHSSD (90 aa). Gly2 carries the N-acetylglycine modification. Ser4 is subject to Phosphoserine. The residue at position 8 (Tyr8) is a Phosphotyrosine. The span at 8–73 shows a compositional bias: basic and acidic residues; it reads YDRRRRDKFR…ERFSPPRHEL (66 aa). 3 positions are modified to phosphoserine: Ser67, Ser74, and Ser136. A Glycyl lysine isopeptide (Lys-Gly) (interchain with G-Cter in SUMO2) cross-link involves residue Lys150. Residues 272-411 form a disordered region; that stretch reads EEEEQAGKTG…KPKDAAGLEC (140 aa). Residues 297 to 345 are compositionally biased toward basic and acidic residues; sequence EGERKANDKDEKKEDGKQAENDSSNDDKTKKSEGDGDKEEKKEEAEKEA. Over residues 369–386 the composition is skewed to acidic residues; it reads SESESEGGQAEEEKEEAE. Positions 387–411 are enriched in basic and acidic residues; that stretch reads EALKEKEKPKEEEKEKPKDAAGLEC. A phosphoserine mark is found at Ser492 and Ser539. Thr543 bears the Phosphothreonine mark. Position 569 is a phosphoserine (Ser569). The tract at residues 571–597 is disordered; the sequence is EEEELLGSSGGPPPEEPPKEGNPAEIN. Residue Thr670 is modified to Phosphothreonine. Ser678 bears the Phosphoserine mark. Residues Arg832, Arg839, and Arg849 each carry the omega-N-methylarginine modification. The disordered stretch occupies residues 834-853; sequence NYDAFRGQGGYPGKPRNRMV.

The protein belongs to the ARS2 family. In terms of assembly, interacts with CASP8AP2 and ERBB4. Interacts with NCBP1/CBP80 and DROSHA. Interacts with LUZP4. Interacts with NCBP2/CBP20 and NCBP3. Interacts with MTREX. Widely expressed, with a preference for proliferating cells. Highly expressed in hematopoietic tissues and reduced or absent expression in parenchymal organs like liver and kidney. In the brain, expressed in the subventricular zone by niche astrocytes, ependymal cells and neural stem cells. In this cerebral context, expressed in slowly dividing cells.

Its subcellular location is the nucleus. The protein localises to the nucleoplasm. It is found in the cytoplasm. In terms of biological role, acts as a mediator between the cap-binding complex (CBC) and the primary microRNAs (miRNAs) processing machinery during cell proliferation. Contributes to the stability and delivery of capped primary miRNA transcripts to the primary miRNA processing complex containing DGCR8 and DROSHA, thereby playing a role in RNA-mediated gene silencing (RNAi) by miRNAs. Binds capped RNAs (m7GpppG-capped RNA); however interaction is probably mediated via its interaction with NCBP1/CBP80 component of the CBC complex. Involved in cell cycle progression at S phase. Does not directly confer arsenite resistance but rather modulates arsenic sensitivity. Independently of its activity on miRNAs, necessary and sufficient to promote neural stem cell self-renewal. Does so by directly binding SOX2 promoter and positively regulating its transcription. This Mus musculus (Mouse) protein is Serrate RNA effector molecule homolog (Srrt).